A 198-amino-acid polypeptide reads, in one-letter code: Holliday junction resolvase RecU (198 aa).

Positions 1–22 (MVNYPHKVSSQKRQTSLSQPKN) are disordered. The segment covering 11–22 (QKRQTSLSQPKN) has biased composition (polar residues). Residues Thr-81, Asp-83, Glu-96, and Gln-115 each contribute to the Mg(2+) site.

This sequence belongs to the RecU family. Requires Mg(2+) as cofactor.

The protein localises to the cytoplasm. The catalysed reaction is Endonucleolytic cleavage at a junction such as a reciprocal single-stranded crossover between two homologous DNA duplexes (Holliday junction).. Endonuclease that resolves Holliday junction intermediates in genetic recombination. Cleaves mobile four-strand junctions by introducing symmetrical nicks in paired strands. Promotes annealing of linear ssDNA with homologous dsDNA. Required for DNA repair, homologous recombination and chromosome segregation. The chain is Holliday junction resolvase RecU from Streptococcus pneumoniae (strain P1031).